The primary structure comprises 73 residues: Translation initiation factor IF-1 (73 aa).

In terms of domain architecture, S1-like spans 1 to 72 (MAKEDHIEMA…SKGRIIFRDK (72 aa)).

Belongs to the IF-1 family. In terms of assembly, component of the 30S ribosomal translation pre-initiation complex which assembles on the 30S ribosome in the order IF-2 and IF-3, IF-1 and N-formylmethionyl-tRNA(fMet); mRNA recruitment can occur at any time during PIC assembly.

Its subcellular location is the cytoplasm. One of the essential components for the initiation of protein synthesis. Stabilizes the binding of IF-2 and IF-3 on the 30S subunit to which N-formylmethionyl-tRNA(fMet) subsequently binds. Helps modulate mRNA selection, yielding the 30S pre-initiation complex (PIC). Upon addition of the 50S ribosomal subunit IF-1, IF-2 and IF-3 are released leaving the mature 70S translation initiation complex. This Legionella pneumophila (strain Paris) protein is Translation initiation factor IF-1.